We begin with the raw amino-acid sequence, 421 residues long: Enolase 1 (421 aa).

Residue Q164 participates in (2R)-2-phosphoglycerate binding. E206 acts as the Proton donor in catalysis. Residues D243, E287, and D314 each coordinate Mg(2+). Residues K339, R368, S369, and K390 each contribute to the (2R)-2-phosphoglycerate site. K339 (proton acceptor) is an active-site residue.

The protein belongs to the enolase family. As to quaternary structure, component of the RNA degradosome, a multiprotein complex involved in RNA processing and mRNA degradation. Mg(2+) serves as cofactor.

The protein localises to the cytoplasm. It localises to the secreted. Its subcellular location is the cell surface. It carries out the reaction (2R)-2-phosphoglycerate = phosphoenolpyruvate + H2O. Its pathway is carbohydrate degradation; glycolysis; pyruvate from D-glyceraldehyde 3-phosphate: step 4/5. Its function is as follows. Catalyzes the reversible conversion of 2-phosphoglycerate (2-PG) into phosphoenolpyruvate (PEP). It is essential for the degradation of carbohydrates via glycolysis. The chain is Enolase 1 from Methylococcus capsulatus (strain ATCC 33009 / NCIMB 11132 / Bath).